The sequence spans 403 residues: Tyrosine--tRNA ligase (403 aa).

A 'HIGH' region motif is present at residues 43 to 52 (PTAPDLHLGH). A 'KMSKS' region motif is present at residues 227–231 (KMSKS). Lys-230 provides a ligand contact to ATP. An S4 RNA-binding domain is found at 338 to 399 (LPIAQLLKQT…GKRKFARVTI (62 aa)).

It belongs to the class-I aminoacyl-tRNA synthetase family. TyrS type 2 subfamily. As to quaternary structure, homodimer.

Its subcellular location is the cytoplasm. It carries out the reaction tRNA(Tyr) + L-tyrosine + ATP = L-tyrosyl-tRNA(Tyr) + AMP + diphosphate + H(+). In terms of biological role, catalyzes the attachment of tyrosine to tRNA(Tyr) in a two-step reaction: tyrosine is first activated by ATP to form Tyr-AMP and then transferred to the acceptor end of tRNA(Tyr). This is Tyrosine--tRNA ligase from Nitrosospira multiformis (strain ATCC 25196 / NCIMB 11849 / C 71).